Reading from the N-terminus, the 319-residue chain is Cytochrome c biogenesis protein CcsA (319 aa).

8 consecutive transmembrane segments (helical) span residues 15–35, 44–64, 71–91, 96–116, 141–161, 223–243, 258–278, and 284–304; these read FSIV…NKIV, GMIL…IFAG, LYES…IPYF, LSAI…SGFF, MILA…LLVI, VISL…VWAN, WAFI…NINL, and AIVA…VNLL.

This sequence belongs to the CcmF/CycK/Ccl1/NrfE/CcsA family. As to quaternary structure, may interact with Ccs1.

It localises to the plastid. It is found in the chloroplast thylakoid membrane. In terms of biological role, required during biogenesis of c-type cytochromes (cytochrome c6 and cytochrome f) at the step of heme attachment. The polypeptide is Cytochrome c biogenesis protein CcsA (Fagopyrum esculentum subsp. ancestrale (Wild buckwheat)).